A 370-amino-acid polypeptide reads, in one-letter code: Pituitary-specific positive transcription factor 1 (370 aa).

Positions Ala-5 to Val-13 match the 9aaTAD motif. The region spanning Met-202 to Glu-276 is the POU-specific domain. The homeobox DNA-binding region spans Lys-292–Lys-351.

This sequence belongs to the POU transcription factor family. Class-1 subfamily. In terms of tissue distribution, pituitary gland.

The protein resides in the nucleus. Its function is as follows. Transcription factor that activates growth hormone and prolactin genes. Specifically binds to the consensus sequence 5'-TAAAT-3'. The chain is Pituitary-specific positive transcription factor 1 (POU1F1) from Meleagris gallopavo (Wild turkey).